The chain runs to 380 residues: Probable peptidoglycan glycosyltransferase FtsW (380 aa).

Transmembrane regions (helical) follow at residues 14-34, 52-72, 79-99, 112-131, 141-161, 162-182, 188-208, 268-288, 304-324, and 341-361; these read LLWCTLCLLLIGVTMVTSSSI, ILYLVILFFIFKIFLDVPISF, IILLISISTLLLVLIIGNSIH, MQPSELSKLAMFCYLSNYLS, FGGFLKPIIIISFPLILLLVE, PDLGTTIVILLTTLSLLFISG, FIPTILIIVVTTTVLIIKSPY, IIGEELGYIGACTILFMIFFI, IFFSGYFAFSIGLWLIFQTLI, and PLISYGGSSLIIVSIAIIILI.

Belongs to the SEDS family. FtsW subfamily.

It is found in the cell membrane. It carries out the reaction [GlcNAc-(1-&gt;4)-Mur2Ac(oyl-L-Ala-gamma-D-Glu-L-Lys-D-Ala-D-Ala)](n)-di-trans,octa-cis-undecaprenyl diphosphate + beta-D-GlcNAc-(1-&gt;4)-Mur2Ac(oyl-L-Ala-gamma-D-Glu-L-Lys-D-Ala-D-Ala)-di-trans,octa-cis-undecaprenyl diphosphate = [GlcNAc-(1-&gt;4)-Mur2Ac(oyl-L-Ala-gamma-D-Glu-L-Lys-D-Ala-D-Ala)](n+1)-di-trans,octa-cis-undecaprenyl diphosphate + di-trans,octa-cis-undecaprenyl diphosphate + H(+). It functions in the pathway cell wall biogenesis; peptidoglycan biosynthesis. Its function is as follows. Peptidoglycan polymerase that is essential for cell division. This chain is Probable peptidoglycan glycosyltransferase FtsW, found in Buchnera aphidicola subsp. Baizongia pistaciae (strain Bp).